The chain runs to 1331 residues: Receptor-type adenylate cyclase B (1331 aa).

Residues 1–33 are Cytoplasmic-facing; that stretch reads MYADATHPRRACWCGAGGVSGCVRQRHAYRCSR. The chain crosses the membrane as a helical span at residues 34–54; it reads LLAGVLLIVGALTLTLAVSTV. The Extracellular segment spans residues 55–898; it reads PAAWAAGAVA…SHALTPAQRG (844 aa). Asn-255, Asn-429, Asn-558, Asn-574, and Asn-657 each carry an N-linked (GlcNAc...) asparagine glycan. A helical membrane pass occupies residues 899-919; sequence GAIAGIALLTVILLAVAGLAL. Residues 920–1331 lie on the Cytoplasmic side of the membrane; the sequence is YCCMDNRNND…PTVCNVRGAH (412 aa). The Guanylate cyclase domain maps to 940 to 1094; the sequence is TLLFTDIESS…DTSNMAARTE (155 aa). Positions 945 and 988 each coordinate Mg(2+).

It belongs to the adenylyl cyclase class-3 family. The cofactor is Mg(2+).

It localises to the membrane. The catalysed reaction is ATP = 3',5'-cyclic AMP + diphosphate. Functionally, could act as a receptor for an unknown ligand. This Leishmania donovani protein is Receptor-type adenylate cyclase B (RAC-B).